Here is a 214-residue protein sequence, read N- to C-terminus: Adenylate kinase (214 aa).

ATP is bound at residue 10–15 (GAGKGT). An NMP region spans residues 30 to 59 (STGDMLRAAVKAGTPLGLEAKKVMDAGQLV). AMP contacts are provided by residues Thr31, Arg36, 57-59 (QLV), 85-88 (GFPR), and Gln92. The interval 122-159 (GRRVHPGSGRVYHIVFNQPKVEGKDDVTGEDLAIRPDD) is LID. ATP-binding positions include Arg123 and 132 to 133 (VY). AMP-binding residues include Arg156 and Arg167. ATP is bound at residue Gln200.

Belongs to the adenylate kinase family. As to quaternary structure, monomer.

The protein resides in the cytoplasm. The catalysed reaction is AMP + ATP = 2 ADP. It participates in purine metabolism; AMP biosynthesis via salvage pathway; AMP from ADP: step 1/1. Catalyzes the reversible transfer of the terminal phosphate group between ATP and AMP. Plays an important role in cellular energy homeostasis and in adenine nucleotide metabolism. The protein is Adenylate kinase of Shewanella woodyi (strain ATCC 51908 / MS32).